Reading from the N-terminus, the 277-residue chain is Large ribosomal subunit protein uL2 (277 aa).

Residues 199-277 (DHMNTSVGKA…ILISRHKRKK (79 aa)) are disordered. Over residues 209-220 (GRTRWMGRRPHN) the composition is skewed to basic residues.

Belongs to the universal ribosomal protein uL2 family. In terms of assembly, part of the 50S ribosomal subunit. Forms a bridge to the 30S subunit in the 70S ribosome.

One of the primary rRNA binding proteins. Required for association of the 30S and 50S subunits to form the 70S ribosome, for tRNA binding and peptide bond formation. It has been suggested to have peptidyltransferase activity; this is somewhat controversial. Makes several contacts with the 16S rRNA in the 70S ribosome. The protein is Large ribosomal subunit protein uL2 of Nitrobacter winogradskyi (strain ATCC 25391 / DSM 10237 / CIP 104748 / NCIMB 11846 / Nb-255).